Consider the following 122-residue polypeptide: Large ribosomal subunit protein bL12 (122 aa).

The protein belongs to the bacterial ribosomal protein bL12 family. Homodimer. Part of the ribosomal stalk of the 50S ribosomal subunit. Forms a multimeric L10(L12)X complex, where L10 forms an elongated spine to which 2 to 4 L12 dimers bind in a sequential fashion. Binds GTP-bound translation factors.

Forms part of the ribosomal stalk which helps the ribosome interact with GTP-bound translation factors. Is thus essential for accurate translation. In Sodalis glossinidius (strain morsitans), this protein is Large ribosomal subunit protein bL12.